Here is a 363-residue protein sequence, read N- to C-terminus: Putative glutamate--cysteine ligase 2 (363 aa).

Belongs to the glutamate--cysteine ligase type 2 family. YbdK subfamily.

The enzyme catalyses L-cysteine + L-glutamate + ATP = gamma-L-glutamyl-L-cysteine + ADP + phosphate + H(+). ATP-dependent carboxylate-amine ligase which exhibits weak glutamate--cysteine ligase activity. In Streptomyces coelicolor (strain ATCC BAA-471 / A3(2) / M145), this protein is Putative glutamate--cysteine ligase 2.